Reading from the N-terminus, the 334-residue chain is ADP-L-glycero-D-manno-heptose-6-epimerase (334 aa).

NADP(+)-binding positions include 11 to 12, 32 to 33, lysine 39, lysine 54, 77 to 81, and asparagine 94; these read FI, DN, and QGACS. The active-site Proton acceptor is tyrosine 141. Lysine 145 contacts NADP(+). Asparagine 171 serves as a coordination point for substrate. NADP(+)-binding residues include valine 172 and lysine 180. The active-site Proton acceptor is the lysine 180. Substrate is bound by residues arginine 182, histidine 189, 203–206, arginine 216, and tyrosine 295; that span reads FGSN.

The protein belongs to the NAD(P)-dependent epimerase/dehydratase family. HldD subfamily. In terms of assembly, homopentamer. NADP(+) is required as a cofactor.

It carries out the reaction ADP-D-glycero-beta-D-manno-heptose = ADP-L-glycero-beta-D-manno-heptose. Its pathway is nucleotide-sugar biosynthesis; ADP-L-glycero-beta-D-manno-heptose biosynthesis; ADP-L-glycero-beta-D-manno-heptose from D-glycero-beta-D-manno-heptose 7-phosphate: step 4/4. The protein operates within bacterial outer membrane biogenesis; LOS core biosynthesis. Catalyzes the interconversion between ADP-D-glycero-beta-D-manno-heptose and ADP-L-glycero-beta-D-manno-heptose via an epimerization at carbon 6 of the heptose. The polypeptide is ADP-L-glycero-D-manno-heptose-6-epimerase (Neisseria meningitidis serogroup B (strain ATCC BAA-335 / MC58)).